The chain runs to 503 residues: UDP-N-acetylmuramate--L-alanine ligase (503 aa).

120–126 contacts ATP; the sequence is GTHGKTS.

This sequence belongs to the MurCDEF family.

It is found in the cytoplasm. The catalysed reaction is UDP-N-acetyl-alpha-D-muramate + L-alanine + ATP = UDP-N-acetyl-alpha-D-muramoyl-L-alanine + ADP + phosphate + H(+). Its pathway is cell wall biogenesis; peptidoglycan biosynthesis. Functionally, cell wall formation. The chain is UDP-N-acetylmuramate--L-alanine ligase from Rhodococcus opacus (strain B4).